A 173-amino-acid chain; its full sequence is Adenine phosphoribosyltransferase (173 aa).

It belongs to the purine/pyrimidine phosphoribosyltransferase family. Homodimer.

It localises to the cytoplasm. It carries out the reaction AMP + diphosphate = 5-phospho-alpha-D-ribose 1-diphosphate + adenine. Its pathway is purine metabolism; AMP biosynthesis via salvage pathway; AMP from adenine: step 1/1. Functionally, catalyzes a salvage reaction resulting in the formation of AMP, that is energically less costly than de novo synthesis. This is Adenine phosphoribosyltransferase from Ureaplasma parvum serovar 3 (strain ATCC 27815 / 27 / NCTC 11736).